The primary structure comprises 516 residues: H/ACA ribonucleoprotein complex subunit DKC1 (516 aa).

A disordered region spans residues 1–24; it reads MADGDGSSVKKRRKKDKRSLPDED. Asp-123 functions as the Nucleophile in the catalytic mechanism. The PUA domain occupies 294–369; it reads HKRLVMKDSA…VVAKIKRVIM (76 aa). The tract at residues 422–516 is disordered; that stretch reads KKEAAKVPQA…KQKEVEESSE (95 aa). A compositionally biased stretch (basic and acidic residues) spans 434–446; that stretch reads EVERAPKRKRESE. Over residues 453–464 the composition is skewed to pro residues; that stretch reads SPPPSPATPPPE. The stretch at 463–516 forms a coiled coil; the sequence is PEELSKKEKKKKKKEKKAKEAAESGEEQVEVISESSAKKKKKKKKQKEVEESSE. Positions 469 to 478 are enriched in basic residues; sequence KEKKKKKKEK.

It belongs to the pseudouridine synthase TruB family. Part of the H/ACA small nucleolar ribonucleoprotein (H/ACA snoRNP) complex, which contains NHP2/NOLA2, GAR1/NOLA1, NOP10/NOLA3, and DKC1/NOLA4, which is presumed to be the catalytic subunit. The complex contains a stable core formed by binding of one or two NOP10-DKC1 heterodimers to NHP2; GAR1 subsequently binds to this core via DKC1. The complex binds a box H/ACA small nucleolar RNA (snoRNA), which may target the specific site of modification within the RNA substrate.

It localises to the nucleus. The protein resides in the nucleolus. The protein localises to the cajal body. It carries out the reaction uridine in 5S rRNA = pseudouridine in 5S rRNA. In terms of biological role, catalytic subunit of H/ACA small nucleolar ribonucleoprotein (H/ACA snoRNP) complex, which catalyzes pseudouridylation of rRNA. This involves the isomerization of uridine such that the ribose is subsequently attached to C5, instead of the normal N1. Each rRNA can contain up to 100 pseudouridine ('psi') residues, which may serve to stabilize the conformation of rRNAs. Required for ribosome biogenesis and telomere maintenance. This chain is H/ACA ribonucleoprotein complex subunit DKC1 (DKC1), found in Gallus gallus (Chicken).